Consider the following 225-residue polypeptide: NAD(P)H-quinone oxidoreductase subunit K, chloroplastic (225 aa).

The [4Fe-4S] cluster site is built by C43, C44, C108, and C139.

It belongs to the complex I 20 kDa subunit family. NDH is composed of at least 16 different subunits, 5 of which are encoded in the nucleus. It depends on [4Fe-4S] cluster as a cofactor.

It localises to the plastid. Its subcellular location is the chloroplast thylakoid membrane. It catalyses the reaction a plastoquinone + NADH + (n+1) H(+)(in) = a plastoquinol + NAD(+) + n H(+)(out). The enzyme catalyses a plastoquinone + NADPH + (n+1) H(+)(in) = a plastoquinol + NADP(+) + n H(+)(out). Its function is as follows. NDH shuttles electrons from NAD(P)H:plastoquinone, via FMN and iron-sulfur (Fe-S) centers, to quinones in the photosynthetic chain and possibly in a chloroplast respiratory chain. The immediate electron acceptor for the enzyme in this species is believed to be plastoquinone. Couples the redox reaction to proton translocation, and thus conserves the redox energy in a proton gradient. The sequence is that of NAD(P)H-quinone oxidoreductase subunit K, chloroplastic from Nuphar advena (Common spatterdock).